The chain runs to 89 residues: Small ribosomal subunit protein bS20 (89 aa).

Basic residues predominate over residues 1-10 (MKNRSAIKRH). Residues 1–30 (MKNRSAIKRHNQSEVRRMRNRSAKSEVRTT) form a disordered region. A compositionally biased stretch (basic and acidic residues) spans 11-30 (NQSEVRRMRNRSAKSEVRTT).

Belongs to the bacterial ribosomal protein bS20 family.

Functionally, binds directly to 16S ribosomal RNA. In Treponema denticola (strain ATCC 35405 / DSM 14222 / CIP 103919 / JCM 8153 / KCTC 15104), this protein is Small ribosomal subunit protein bS20.